The primary structure comprises 89 residues: Small ribosomal subunit protein uS15 (89 aa).

The protein belongs to the universal ribosomal protein uS15 family. As to quaternary structure, part of the 30S ribosomal subunit. Forms a bridge to the 50S subunit in the 70S ribosome, contacting the 23S rRNA.

Its function is as follows. One of the primary rRNA binding proteins, it binds directly to 16S rRNA where it helps nucleate assembly of the platform of the 30S subunit by binding and bridging several RNA helices of the 16S rRNA. In terms of biological role, forms an intersubunit bridge (bridge B4) with the 23S rRNA of the 50S subunit in the ribosome. This is Small ribosomal subunit protein uS15 from Methylorubrum populi (strain ATCC BAA-705 / NCIMB 13946 / BJ001) (Methylobacterium populi).